The sequence spans 324 residues: Signal peptidase I (324 aa).

Blocked amino end (Met) is present on Met-1. The Periplasmic segment spans residues 1 to 3 (MAN). The helical transmembrane segment at 4 to 22 (MFALILVIATLVTGILWCV) threads the bilayer. At 23 to 58 (DKFFFAPKRRERQAAAQAAAGDSLDKATLKKVAPKP) the chain is on the cytoplasmic side. Residues 59 to 77 (GWLETGASVFPVLAIVLIV) traverse the membrane as a helical segment. Residues 78–324 (RSFIYEPFQI…LRLSRIGGIH (247 aa)) lie on the Periplasmic side of the membrane. Catalysis depends on residues Ser-91 and Lys-146. A disulfide bridge connects residues Cys-171 and Cys-177.

The protein belongs to the peptidase S26 family.

It localises to the cell inner membrane. The catalysed reaction is Cleavage of hydrophobic, N-terminal signal or leader sequences from secreted and periplasmic proteins.. The polypeptide is Signal peptidase I (lepB) (Escherichia coli (strain K12)).